The following is a 317-amino-acid chain: Melanocyte-stimulating hormone receptor (317 aa).

The Extracellular portion of the chain corresponds to 1–37; sequence MPALGSPRRLLGSLNCTPPATLPLTLAPNRTGPQCLE. A glycan (N-linked (GlcNAc...) asparagine) is linked at Asn29. The chain crosses the membrane as a helical span at residues 38–63; it reads VSIPDGLFLSLGLVSLVENVLVVAAI. Residues 64-72 lie on the Cytoplasmic side of the membrane; sequence AKNRNLHSP. The helical transmembrane segment at 73 to 93 threads the bilayer; sequence MYYFICCLAMSDLLVSVSNVL. At 94-118 the chain is on the extracellular side; it reads ETAVMLLLEAGVLATRAAVVQQLDN. The chain crosses the membrane as a helical span at residues 119-140; that stretch reads VIDVLICSSMVSSLCFLGAIAV. Over 141-163 the chain is Cytoplasmic; the sequence is DRYISIFYALRYHSVVTLPRAWR. Residues 164–183 form a helical membrane-spanning segment; sequence IIAAIWVASILTSVLSITYY. Residues 184–191 lie on the Extracellular side of the membrane; sequence NHTVVLLC. The helical transmembrane segment at 192 to 211 threads the bilayer; that stretch reads LVGFFIAMLALMAVLYVHML. The Cytoplasmic portion of the chain corresponds to 212 to 240; sequence ARACQHARGIARLQKRQRPIHQGFGLKGA. Residues 241 to 266 traverse the membrane as a helical segment; that stretch reads ATLTILLGVFFLCWGPFFLHLSLIVL. The Extracellular segment spans residues 267–279; that stretch reads CPQHPTCGCIFKN. A helical transmembrane segment spans residues 280-300; sequence FNLFLALIICNAIVDPLIYAF. Topologically, residues 301-317 are cytoplasmic; sequence RSQELRKTLQEVLQCSW. A lipid anchor (S-palmitoyl cysteine) is attached at Cys315.

Belongs to the G-protein coupled receptor 1 family. As to quaternary structure, interacts with MGRN1, but does not undergo MGRN1-mediated ubiquitination; this interaction competes with GNAS-binding and thus inhibits agonist-induced cAMP production. Interacts with OPN3; the interaction results in a decrease in MC1R-mediated cAMP signaling and ultimately a decrease in melanin production in melanocytes.

Its subcellular location is the cell membrane. Receptor for MSH (alpha, beta and gamma) and ACTH. The activity of this receptor is mediated by G proteins which activate adenylate cyclase. Mediates melanogenesis, the production of eumelanin (black/brown) and phaeomelanin (red/yellow), via regulation of cAMP signaling in melanocytes. In Capra hircus (Goat), this protein is Melanocyte-stimulating hormone receptor (MC1R).